Reading from the N-terminus, the 254-residue chain is Cobalt transport protein CbiM (254 aa).

An N-terminal signal peptide occupies residues 1 to 31 (MKTILRPFTLLSRSIFLALFVLFLWSPDAHA). Helical transmembrane passes span 37–57 (GFLPPSWSLFWWVLTLPFLVV), 74–94 (LLLAMAGAFAFVLSSLKIPSV), 106–126 (LGAVLFGPSVMSVLGVIVLLF), 128–148 (ALLLAHGGLTTLGANAFSMAI), 169–189 (WLAVFLAAAIGDLMTYVVTSL), and 212–232 (IFALTQVPLAISEGILTVMVF).

Belongs to the CbiM family. As to quaternary structure, forms an energy-coupling factor (ECF) transporter complex composed of an ATP-binding protein (A component, CbiO), a transmembrane protein (T component, CbiQ) and 2 possible substrate-capture proteins (S components, CbiM and CbiN) of unknown stoichimetry.

Its subcellular location is the cell inner membrane. The protein operates within cofactor biosynthesis; adenosylcobalamin biosynthesis. In terms of biological role, part of the energy-coupling factor (ECF) transporter complex CbiMNOQ involved in cobalt import. This Chlorobium limicola (strain DSM 245 / NBRC 103803 / 6330) protein is Cobalt transport protein CbiM.